Here is a 466-residue protein sequence, read N- to C-terminus: 3-isopropylmalate dehydratase large subunit (466 aa).

Residues C347, C407, and C410 each contribute to the [4Fe-4S] cluster site.

It belongs to the aconitase/IPM isomerase family. LeuC type 1 subfamily. In terms of assembly, heterodimer of LeuC and LeuD. The cofactor is [4Fe-4S] cluster.

The enzyme catalyses (2R,3S)-3-isopropylmalate = (2S)-2-isopropylmalate. It participates in amino-acid biosynthesis; L-leucine biosynthesis; L-leucine from 3-methyl-2-oxobutanoate: step 2/4. In terms of biological role, catalyzes the isomerization between 2-isopropylmalate and 3-isopropylmalate, via the formation of 2-isopropylmaleate. This Shewanella halifaxensis (strain HAW-EB4) protein is 3-isopropylmalate dehydratase large subunit.